The sequence spans 456 residues: Exodeoxyribonuclease 7 large subunit (456 aa).

The protein belongs to the XseA family. Heterooligomer composed of large and small subunits.

The protein localises to the cytoplasm. The catalysed reaction is Exonucleolytic cleavage in either 5'- to 3'- or 3'- to 5'-direction to yield nucleoside 5'-phosphates.. Its function is as follows. Bidirectionally degrades single-stranded DNA into large acid-insoluble oligonucleotides, which are then degraded further into small acid-soluble oligonucleotides. The protein is Exodeoxyribonuclease 7 large subunit of Shigella boydii serotype 18 (strain CDC 3083-94 / BS512).